An 865-amino-acid polypeptide reads, in one-letter code: Leucine--tRNA ligase (865 aa).

Residues 41–51 (PYPSGRIHMGH) carry the 'HIGH' region motif. A 'KMSKS' region motif is present at residues 614 to 618 (KMSKS). Lysine 617 is a binding site for ATP.

This sequence belongs to the class-I aminoacyl-tRNA synthetase family.

Its subcellular location is the cytoplasm. The catalysed reaction is tRNA(Leu) + L-leucine + ATP = L-leucyl-tRNA(Leu) + AMP + diphosphate. This Rhodospirillum centenum (strain ATCC 51521 / SW) protein is Leucine--tRNA ligase.